We begin with the raw amino-acid sequence, 346 residues long: Dihydroorotase (346 aa).

2 residues coordinate Zn(2+): histidine 13 and histidine 15. Substrate contacts are provided by residues 15-17 and asparagine 41; that span reads HLR. The Zn(2+) site is built by lysine 99, histidine 136, and histidine 174. Lysine 99 bears the N6-carboxylysine mark. Histidine 136 serves as a coordination point for substrate. Residue leucine 219 participates in substrate binding. Position 247 (aspartate 247) interacts with Zn(2+). Aspartate 247 is a catalytic residue. The substrate site is built by histidine 251 and alanine 263.

Belongs to the metallo-dependent hydrolases superfamily. DHOase family. Class II DHOase subfamily. In terms of assembly, homodimer. Requires Zn(2+) as cofactor.

The catalysed reaction is (S)-dihydroorotate + H2O = N-carbamoyl-L-aspartate + H(+). It participates in pyrimidine metabolism; UMP biosynthesis via de novo pathway; (S)-dihydroorotate from bicarbonate: step 3/3. Functionally, catalyzes the reversible cyclization of carbamoyl aspartate to dihydroorotate. The polypeptide is Dihydroorotase (Rhizobium rhizogenes (strain K84 / ATCC BAA-868) (Agrobacterium radiobacter)).